A 415-amino-acid polypeptide reads, in one-letter code: UDP-N-acetylmuramoylalanine--D-glutamate ligase (415 aa).

ATP is bound at residue 91-97 (GTDGKST).

It belongs to the MurCDEF family.

It localises to the cytoplasm. The catalysed reaction is UDP-N-acetyl-alpha-D-muramoyl-L-alanine + D-glutamate + ATP = UDP-N-acetyl-alpha-D-muramoyl-L-alanyl-D-glutamate + ADP + phosphate + H(+). Its pathway is cell wall biogenesis; peptidoglycan biosynthesis. Functionally, cell wall formation. Catalyzes the addition of glutamate to the nucleotide precursor UDP-N-acetylmuramoyl-L-alanine (UMA). This chain is UDP-N-acetylmuramoylalanine--D-glutamate ligase, found in Aquifex aeolicus (strain VF5).